The following is a 410-amino-acid chain: MNNGINVNSEIGKLKSVLLHRPGAEVENITPDTMKQLLFDDIPYLKIAQKEHDFFAQTLRDNGAETVYIENLATEVFEKSSETKEEFLSHLLHEAGYRPGRTYDGLTEYLTSMPTKDMVEKVYAGVRKNELDIKRTALSDMAGSDAENYFYLNPLPNAYFTRDPQASMGVGMTINKMTFPARQPESLITEYVMANHPRFKDTPIWRDRNHTTRIEGGDELILNKTTVAIGVSERTSSKTIQNLAKELFANPLSTFDTVLAVEIPHNHAMMHLDTVFTMINHDQFTVFPGIMDGAGNINVFILRPGQDGEVEIEHLTDLKAALKKVLNLSELDLIECGAGDPIAAPREQWNDGSNTLAIAPGEIVTYDRNYVTVELLKEHGIKVHEILSSELGRGRGGARCMSQPLWREDL.

Residue cysteine 400 is the Amidino-cysteine intermediate of the active site.

This sequence belongs to the arginine deiminase family.

It is found in the cytoplasm. It carries out the reaction L-arginine + H2O = L-citrulline + NH4(+). The protein operates within amino-acid degradation; L-arginine degradation via ADI pathway; carbamoyl phosphate from L-arginine: step 1/2. This is Arginine deiminase from Lactococcus lactis subsp. cremoris (strain MG1363).